Reading from the N-terminus, the 470-residue chain is MSSGRIVQIIGAVIDVEFPRDSVPKVYDALTVADKGLTLEVQQQLGDGVVRAIAMGGSEGVSRGLAVENTGAPINVPVGTATLGRIMDVLGNPIDEKGPINETERASIHRKAPKYDELAASEELLATGIKVIDLVCPFAKGGKVGLFGGAGVGKTVNMMELINNIATEHSGLSVFAGVGERTREGNDFYFEMQEAGVVNVDKFDESKVAMVYGQMNEPPGNRLRVALTGLTMAEKFRDEGKDVLLFVDNIYRYTLAGTEVSALLGRMPSAVGYQPTLAEEMGVLQERITSTKTGSITSIQAVYVPADDLTDPSPATTFAHLDSTVVLSRDIAAKGIYPAIDPLDSSSRQLDPLIIGQEHYDTARGVQSVLQRYKELKDIIAILGMDELSEEDKLTVSRARKIERFLSQPFNVAKVFTGQDGKIVSLKDTISGFQGLLSGQYDDLPEQAFYMVGSIDEAIEKAKKMKEKAA.

148–155 (GGAGVGKT) contributes to the ATP binding site.

The protein belongs to the ATPase alpha/beta chains family. F-type ATPases have 2 components, CF(1) - the catalytic core - and CF(0) - the membrane proton channel. CF(1) has five subunits: alpha(3), beta(3), gamma(1), delta(1), epsilon(1). CF(0) has three main subunits: a(1), b(2) and c(9-12). The alpha and beta chains form an alternating ring which encloses part of the gamma chain. CF(1) is attached to CF(0) by a central stalk formed by the gamma and epsilon chains, while a peripheral stalk is formed by the delta and b chains.

It is found in the cell inner membrane. It catalyses the reaction ATP + H2O + 4 H(+)(in) = ADP + phosphate + 5 H(+)(out). Its function is as follows. Produces ATP from ADP in the presence of a proton gradient across the membrane. The catalytic sites are hosted primarily by the beta subunits. The protein is ATP synthase subunit beta of Saccharophagus degradans (strain 2-40 / ATCC 43961 / DSM 17024).